Reading from the N-terminus, the 713-residue chain is MSPSAVQSSKLEEQSSEIDKLKAKMSQSAATAQQKKEHEYEHLTSVKIVPQRPISDRLQPAIATHYSPHLDGLQDYQRLHKESIEDPAKFFGSKATQFLNWSKPFDKVFIPDPKTGRPSFQNNAWFLNGQLNACYNCVDRHALKTPNKKAIIFEGDEPGQGYSITYKELLEEVCQVAQVLTYSMGVRKGDTVAVYMPMVPEAIITLLAISRIGAIHSVVFAGFSSNSLRDRINDGDSKVVITTDESNRGGKVIETKRIVDDALRETPGVRHVLVYRKTNNPSVAFHAPRDLDWATEKKKYKTYYPCTPVDSEDPLFLLYTSGSTGAPKGVQHSTAGYLLGALLTMRYTFDTHQEDVFFTAGDIGWITGHTYVVYGPLLYGCATLVFEGTPAYPNYSRYWDIIDEHKVTQFYVAPTALRLLKRAGDSYIENHSLKSLRCLGSVGEPIAAEVWEWYSEKIGKNEIPIVDTYWQTESGSHLVTPLAGGVTPMKPGSASFPFFGIDAVVLDPNTGEELNTSHAEGVLAVKAAWPSFARTIWKNHDRYLDTYLNPYPGYYFTGDGAAKDKDGYIWILGRVDDVVNVSGHRLSTAEIEAAIIEDPIVAECAVVGFNDDLTGQAVAAFVVLKNKSSWSTATDDELQDIKKHLVFTVRKDIGPFAAPKLIILVDDLPKTRSGKIMRRILRKILAGESDQLGDVSTLSNPGIVRHLIDSVKL.

The tract at residues 1-39 is disordered; that stretch reads MSPSAVQSSKLEEQSSEIDKLKAKMSQSAATAQQKKEHE. Positions 10-22 are enriched in basic and acidic residues; the sequence is KLEEQSSEIDKLK. Residues 248-251 and Thr-367 each bind CoA; that span reads RGGK. ATP contacts are provided by residues 443 to 445, 467 to 472, Asp-559, and Arg-574; these read GEP and DTYWQT. Positions 552–600 match the FACS motif; sequence PGYYFTGDGAAKDKDGYIWILGRVDDVVNVSGHRLSTAEIEAAIIEDPI. Ser-582 is a CoA binding site. Residue Arg-585 coordinates ATP. Arg-650 serves as a coordination point for CoA. Positions 711 to 713 match the Microbody targeting signal motif; it reads VKL.

This sequence belongs to the ATP-dependent AMP-binding enzyme family.

It localises to the microsome. It is found in the cytoplasm. The protein localises to the mitochondrion. The protein resides in the nucleus. The enzyme catalyses acetate + ATP + CoA = acetyl-CoA + AMP + diphosphate. In terms of biological role, catalyzes the production of acetyl-CoA. Provides the acetyl-CoA source for histone acetylation in the nucleus. 'Aerobic' isozyme of acetyl-coenzyme A synthetase, which supports growth on nonfermentable carbon sources such as glycerol and ethanol. May be required for assimilation of ethanol and acetate. The chain is Acetyl-coenzyme A synthetase 1 (ACS1) from Saccharomyces cerevisiae (strain ATCC 204508 / S288c) (Baker's yeast).